The primary structure comprises 84 residues: Large ribosomal subunit protein bL27 (84 aa).

A disordered region spans residues Met-1–Gly-22.

This sequence belongs to the bacterial ribosomal protein bL27 family.

The protein is Large ribosomal subunit protein bL27 of Shewanella woodyi (strain ATCC 51908 / MS32).